A 700-amino-acid chain; its full sequence is Choline transporter-like protein 5-B (700 aa).

Topologically, residues 1 to 4 are cytoplasmic; it reads GCTD. A helical transmembrane segment spans residues 5–25; sequence VLCCVIFVIVILGYIVLGTVA. At 26–209 the chain is on the extracellular side; the sequence is WMHGDPRKVV…KIFEDYASSW (184 aa). 2 N-linked (GlcNAc...) asparagine glycosylation sites follow: Asn157 and Asn164. The chain crosses the membrane as a helical span at residues 210-230; that stretch reads FWILIGLVISMLVSLVFILLL. Residues 231–233 are Cytoplasmic-facing; the sequence is RFT. A helical transmembrane segment spans residues 234–254; that stretch reads AGVLFWLVIFGVIAAVGYGIW. At 255 to 292 the chain is on the extracellular side; sequence HCYWEYSSLKGKPDSDVTISDIGFQTDFRVYLQLSQTW. The helical transmembrane segment at 293 to 313 threads the bilayer; the sequence is LIFMTSLAVIEAIIILVLIFL. Topologically, residues 314–341 are cytoplasmic; it reads RNRVRIAIALLKEGSKAIGCIMSTLFYP. A helical transmembrane segment spans residues 342-362; the sequence is IITFLLLALCIAYWAVTAVFL. The Extracellular portion of the chain corresponds to 363–432; that stretch reads ASSGEAVYKV…LQLCNLLVFL (70 aa). N-linked (GlcNAc...) asparagine glycans are attached at residues Asn383 and Asn395. Residues 433 to 455 traverse the membrane as a helical segment; that stretch reads WLVNFTIALGQCTLAGAFAAYYW. Over 456 to 482 the chain is Cytoplasmic; that stretch reads ALRKPADIPPCPLASSFGRALRYHTGS. A helical membrane pass occupies residues 483–503; sequence LAFGALILSIVQFIRIILEYL. The Extracellular segment spans residues 504-541; it reads DHKLKGAHNAFTRFLLCCLKCCFWCLEHFIKFMNRNAY. The chain crosses the membrane as a helical span at residues 542-562; that stretch reads IMISIYGKNFCTSARDAFFLL. Residues 563–577 are Cytoplasmic-facing; the sequence is MRNVMRVAVLDKVTD. Residues 578 to 598 traverse the membrane as a helical segment; sequence FLLFLGKLLISGSVGVLAFFF. Topologically, residues 599-616 are extracellular; that stretch reads FTRQIPVIQEEVPSLNYY. Residues 617–637 form a helical membrane-spanning segment; the sequence is WVPLLTVIFGSYMIAHGFFNV. Residues 638–687 lie on the Cytoplasmic side of the membrane; the sequence is YAMCVDTLFLCFLLDLEKNDGSATRPYYMCSSLRAILNKKNQKRPKETKR. The disordered stretch occupies residues 676 to 700; sequence KKNQKRPKETKRGRKQKKEQPKSRH. The span at 677 to 692 shows a compositional bias: basic residues; sequence KNQKRPKETKRGRKQK.

This sequence belongs to the CTL (choline transporter-like) family.

It localises to the cell membrane. It catalyses the reaction choline(out) + n H(+)(in) = choline(in) + n H(+)(out). In terms of biological role, choline/H+ antiporter. This is Choline transporter-like protein 5-B (slc44a5b) from Danio rerio (Zebrafish).